We begin with the raw amino-acid sequence, 108 residues long: Evasin P1229 (108 aa).

Residues 1–31 (MEVRTFAFLQIVVFVALGIQLFAAVTDAADA) form the signal peptide. Cystine bridges form between Cys-41-Cys-63, Cys-45-Cys-65, and Cys-56-Cys-76. Asn-44 carries N-linked (GlcNAc...) asparagine glycosylation. Residues 88 to 108 (GDPNNSDLDAATPRHPDASSR) form a disordered region. The N-linked (GlcNAc...) asparagine glycan is linked to Asn-91. The span at 99 to 108 (TPRHPDASSR) shows a compositional bias: basic and acidic residues.

The protein localises to the secreted. Its function is as follows. Salivary chemokine-binding protein which binds to host chemokines CXCL1 and CXCL8. The protein is Evasin P1229 of Ixodes ricinus (Common tick).